The following is a 316-amino-acid chain: Ribosomal RNA small subunit methyltransferase H (316 aa).

S-adenosyl-L-methionine is bound by residues 35–37, Asp55, Phe84, Asp105, and Gln112; that span reads AGH.

It belongs to the methyltransferase superfamily. RsmH family.

It localises to the cytoplasm. The enzyme catalyses cytidine(1402) in 16S rRNA + S-adenosyl-L-methionine = N(4)-methylcytidine(1402) in 16S rRNA + S-adenosyl-L-homocysteine + H(+). Functionally, specifically methylates the N4 position of cytidine in position 1402 (C1402) of 16S rRNA. This is Ribosomal RNA small subunit methyltransferase H from Streptococcus pneumoniae (strain P1031).